A 109-amino-acid chain; its full sequence is Iron-sulfur assembly protein IscA-like 3, mitochondrial (109 aa).

Residues 1 to 18 (MRKQVLALSDTAAARIRQ) constitute a mitochondrion transit peptide. Residues Cys-37, Cys-100, and Cys-102 each contribute to the Fe cation site.

The protein belongs to the HesB/IscA family. Homodimer; may form tetramers and higher multimers. The cofactor is Fe cation.

It localises to the mitochondrion. Its function is as follows. Involved in the assembly of mitochondrial iron-sulfur proteins. Probably involved in the binding of an intermediate of Fe/S cluster assembly. The protein is Iron-sulfur assembly protein IscA-like 3, mitochondrial of Arabidopsis thaliana (Mouse-ear cress).